We begin with the raw amino-acid sequence, 191 residues long: UPF0398 protein LCABL_17010 (191 aa).

It belongs to the UPF0398 family.

The protein is UPF0398 protein LCABL_17010 of Lacticaseibacillus casei (strain BL23) (Lactobacillus casei).